Reading from the N-terminus, the 497-residue chain is POU domain, class 3, transcription factor 3 (497 aa).

The span at 31 to 51 (GGGGGGGGGGGGAGGGGGGMQ) shows a compositional bias: gly residues. 4 disordered regions span residues 31-62 (GGGG…SGAY), 121-189 (WSGS…WGAA), 230-316 (NGML…TPTS), and 458-497 (EKRM…TSVQ). Pro residues-rich tracts occupy residues 133–145 (QQPP…PPQG) and 170–180 (HLGPPPPPPHQ). Residues 240-250 (GGGGGGAGGGA) are compositionally biased toward gly residues. Positions 269–286 (HHHHHHHHAHPHPPHPHH) are enriched in basic residues. The region spanning 311 to 385 (EDTPTSDDLE…LLNKWLEEAD (75 aa)) is the POU-specific domain. Residues 403 to 462 (KRKKRTSIEVSVKGALESHFLKCPKPSAQEITNLADSLQLEKEVVRVWFCNRRQKEKRMT) constitute a DNA-binding region (homeobox). A compositionally biased stretch (polar residues) spans 465 to 483 (GIQQQTPDDVYSQVGTVSA).

This sequence belongs to the POU transcription factor family. Class-3 subfamily. As to quaternary structure, homodimer. Brain.

Its subcellular location is the nucleus. Functionally, transcription factor that acts synergistically with SOX11 and SOX4. Plays a role in neuronal development. Is implicated in an enhancer activity at the embryonic met-mesencephalic junction; the enhancer element contains the octamer motif (5'-ATTTGCAT-3'). The protein is POU domain, class 3, transcription factor 3 (Pou3f3) of Rattus norvegicus (Rat).